The following is a 203-amino-acid chain: Small ribosomal subunit protein uS4 (203 aa).

One can recognise an S4 RNA-binding domain in the interval 93–156 (RRLDNVVYRL…IKVPAILEAV (64 aa)).

The protein belongs to the universal ribosomal protein uS4 family. In terms of assembly, part of the 30S ribosomal subunit. Contacts protein S5. The interaction surface between S4 and S5 is involved in control of translational fidelity.

One of the primary rRNA binding proteins, it binds directly to 16S rRNA where it nucleates assembly of the body of the 30S subunit. Functionally, with S5 and S12 plays an important role in translational accuracy. The protein is Small ribosomal subunit protein uS4 of Streptococcus suis (strain 98HAH33).